A 311-amino-acid polypeptide reads, in one-letter code: Olfactory receptor 2Y1 (311 aa).

The Extracellular portion of the chain corresponds to 1-25 (MGSFNTSFEDGFILVGFSDWPQLEP). Residue N5 is glycosylated (N-linked (GlcNAc...) asparagine). The helical transmembrane segment at 26 to 49 (ILFVFIFIFYSLTLFGNTIIIALS) threads the bilayer. At 50-57 (WLDLRLHT) the chain is on the cytoplasmic side. A helical transmembrane segment spans residues 58–79 (PMYFFLSHLSLLDLCFTTSTVP). The Extracellular segment spans residues 80 to 100 (QLLINLCGVDRTITRGGCVAQ). The cysteines at positions 97 and 188 are disulfide-linked. A helical membrane pass occupies residues 101–120 (LFIYLALGSTECVLLVVMAF). The Cytoplasmic portion of the chain corresponds to 121–139 (DRYAAVCRPLHYMAIMHPH). Residues 140-158 (LCQTLAIASWGAGFVNSLI) form a helical membrane-spanning segment. The Extracellular portion of the chain corresponds to 159-194 (QTGLAMAMPLCGHRLNHFFCEMPVFLKLACADTEGT). A helical transmembrane segment spans residues 195 to 218 (EAKMFVARVIVVAVPAALILGSYV). Topologically, residues 219–235 (HIAHAVLRVKSTAGRRK) are cytoplasmic. A helical membrane pass occupies residues 236 to 258 (AFGTCGSHLLVVFLFYGSAIYTY). Residues 259-271 (LQSIHNYSEREGK) lie on the Extracellular side of the membrane. N264 carries an N-linked (GlcNAc...) asparagine glycan. The chain crosses the membrane as a helical span at residues 272–291 (FVALFYTIITPILNPLIYTL). Residues 292–311 (RNKDVKGALWKVLWRGRDSG) are Cytoplasmic-facing.

This sequence belongs to the G-protein coupled receptor 1 family.

It localises to the cell membrane. Odorant receptor. This is Olfactory receptor 2Y1 (OR2Y1) from Homo sapiens (Human).